We begin with the raw amino-acid sequence, 186 residues long: Auxin-responsive protein IAA4 (186 aa).

The EAR-like (transcriptional repression) signature appears at 18–22 (LRLGL). Residues 25–62 (TEETVSCGKSNKRVLPEATEKEIESTGKTETASPPKAQ) are disordered. Residues 38 to 51 (VLPEATEKEIESTG) are compositionally biased toward basic and acidic residues. The PB1 domain occupies 88-175 (GNYVKVSMDG…SCKRLRIMKG (88 aa)).

This sequence belongs to the Aux/IAA family. Homodimers and heterodimers. Interacts with TPL. In terms of tissue distribution, preferentially expressed in stems, leaves and flowers.

It localises to the nucleus. Aux/IAA proteins are short-lived transcriptional factors that function as repressors of early auxin response genes at low auxin concentrations. Repression is thought to result from the interaction with auxin response factors (ARFs), proteins that bind to the auxin-responsive promoter element (AuxRE). Formation of heterodimers with ARF proteins may alter their ability to modulate early auxin response genes expression. The protein is Auxin-responsive protein IAA4 (IAA4) of Arabidopsis thaliana (Mouse-ear cress).